We begin with the raw amino-acid sequence, 299 residues long: Pyridoxal 5'-phosphate synthase subunit PdxS (299 aa).

D24 serves as a coordination point for D-ribose 5-phosphate. The Schiff-base intermediate with D-ribose 5-phosphate role is filled by K81. Residue G153 coordinates D-ribose 5-phosphate. R165 contributes to the D-glyceraldehyde 3-phosphate binding site. Residues G219 and 240–241 (GS) each bind D-ribose 5-phosphate.

The protein belongs to the PdxS/SNZ family. In the presence of PdxT, forms a dodecamer of heterodimers.

The enzyme catalyses aldehydo-D-ribose 5-phosphate + D-glyceraldehyde 3-phosphate + L-glutamine = pyridoxal 5'-phosphate + L-glutamate + phosphate + 3 H2O + H(+). It participates in cofactor biosynthesis; pyridoxal 5'-phosphate biosynthesis. Functionally, catalyzes the formation of pyridoxal 5'-phosphate from ribose 5-phosphate (RBP), glyceraldehyde 3-phosphate (G3P) and ammonia. The ammonia is provided by the PdxT subunit. Can also use ribulose 5-phosphate and dihydroxyacetone phosphate as substrates, resulting from enzyme-catalyzed isomerization of RBP and G3P, respectively. This Methanococcus aeolicus (strain ATCC BAA-1280 / DSM 17508 / OCM 812 / Nankai-3) protein is Pyridoxal 5'-phosphate synthase subunit PdxS.